The primary structure comprises 679 residues: Protein hook (679 aa).

The Calponin-homology (CH) domain occupies 6–123 (NEMYYSLLEW…RLLQLVLGCA (118 aa)). Coiled-coil stretches lie at residues 135–437 (EIMC…LKCG) and 480–574 (QTAL…QEIL).

The protein belongs to the hook family. As to quaternary structure, homodimer. Interacts with microtubules via its N-terminus.

The protein resides in the cytoplasm. It is found in the cytoskeleton. The protein localises to the endosome. Its subcellular location is the synapse. Its function is as follows. Involved in endocytic trafficking by stabilizing organelles of the endocytic pathway. Probably acts as a cytoskeletal linker protein required to tether endosome vesicles to the cytoskeleton. Involved in modulation of endocytosis at stages required for down-regulation of membrane proteins that control synapse size. Not involved in synaptic vesicle recycling. Required in R7 cells for boss endocytosis into multivesicular bodies (MVBs). Has a role in regulating adult longevity. The polypeptide is Protein hook (Drosophila sechellia (Fruit fly)).